The sequence spans 199 residues: Imidazole glycerol phosphate synthase subunit HisH 2 (199 aa).

One can recognise a Glutamine amidotransferase type-1 domain in the interval 1–199 (MIAVIDVSGN…NNFLSLESTC (199 aa)). Residue cysteine 76 is the Nucleophile of the active site. Active-site residues include histidine 177 and glutamate 179.

Heterodimer of HisH and HisF.

Its subcellular location is the cytoplasm. The enzyme catalyses 5-[(5-phospho-1-deoxy-D-ribulos-1-ylimino)methylamino]-1-(5-phospho-beta-D-ribosyl)imidazole-4-carboxamide + L-glutamine = D-erythro-1-(imidazol-4-yl)glycerol 3-phosphate + 5-amino-1-(5-phospho-beta-D-ribosyl)imidazole-4-carboxamide + L-glutamate + H(+). The catalysed reaction is L-glutamine + H2O = L-glutamate + NH4(+). The protein operates within amino-acid biosynthesis; L-histidine biosynthesis; L-histidine from 5-phospho-alpha-D-ribose 1-diphosphate: step 5/9. Functionally, IGPS catalyzes the conversion of PRFAR and glutamine to IGP, AICAR and glutamate. The HisH subunit provides the glutamine amidotransferase activity that produces the ammonia necessary to HisF for the synthesis of IGP and AICAR. The chain is Imidazole glycerol phosphate synthase subunit HisH 2 from Legionella pneumophila (strain Paris).